The chain runs to 162 residues: Transcription regulatory protein motB (162 aa).

Monomer. Homodimer.

Functionally, compacts the host nucleoid. Probably dysregulates hundreds of host genes including derepression of most of the H-NS regulon. Plays a role in the transcriptional regulation of middle promoters. The chain is Transcription regulatory protein motB (motB) from Enterobacteria phage T4 (Bacteriophage T4).